The chain runs to 258 residues: (7aS)-7a-methyl-1,5-dioxo-2,3,5,6,7,7a-hexahydro-1H-indene-carboxyl-CoA hydrolase (258 aa).

Belongs to the enoyl-CoA hydratase/isomerase family.

It catalyses the reaction (7aS)-7a-methyl-1,5-dioxo-2,3,5,6,7,7a-hexahydro-1H-indene-carboxyl-CoA + H2O = (3E)-2-(2-carboxylatoethyl)-3-methyl-6-oxocyclohex-1-ene-1-carboxyl-CoA + H(+). Its pathway is steroid metabolism; cholesterol degradation. Functionally, involved in the final steps of cholesterol and steroid degradation. Catalyzes the hydrolytic ring D opening of (7aS)-7a-methyl-1,5-dioxo-2,3,5,6,7,7a-hexahydro-1H-indene-carboxyl-CoA (HIEC-CoA) to (3E)-2-(2-carboxylatoethyl)-3-methyl-6-oxocyclohex-1-ene-1-carboxyl-CoA (COCHEA-CoA). This Rhodococcus jostii (strain RHA1) protein is (7aS)-7a-methyl-1,5-dioxo-2,3,5,6,7,7a-hexahydro-1H-indene-carboxyl-CoA hydrolase.